The chain runs to 1163 residues: DNA-directed RNA polymerase subunit beta 2 (1163 aa).

The protein belongs to the RNA polymerase beta chain family. In terms of assembly, the RNAP catalytic core consists of 2 alpha, 1 beta, 1 beta' and 1 omega subunit. When a sigma factor is associated with the core the holoenzyme is formed, which can initiate transcription.

The enzyme catalyses RNA(n) + a ribonucleoside 5'-triphosphate = RNA(n+1) + diphosphate. Functionally, DNA-dependent RNA polymerase catalyzes the transcription of DNA into RNA using the four ribonucleoside triphosphates as substrates. In Nocardia farcinica (strain IFM 10152), this protein is DNA-directed RNA polymerase subunit beta 2.